Consider the following 118-residue polypeptide: UPF0102 protein Arth_2474 (118 aa).

This sequence belongs to the UPF0102 family.

The protein is UPF0102 protein Arth_2474 of Arthrobacter sp. (strain FB24).